Here is a 509-residue protein sequence, read N- to C-terminus: ATP synthase subunit alpha (509 aa).

ATP is bound at residue 171-178; the sequence is GDRKTGKT.

Belongs to the ATPase alpha/beta chains family. F-type ATPases have 2 components, CF(1) - the catalytic core - and CF(0) - the membrane proton channel. CF(1) has five subunits: alpha(3), beta(3), gamma(1), delta(1), epsilon(1). CF(0) has three main subunits: a(1), b(2) and c(9-12). The alpha and beta chains form an alternating ring which encloses part of the gamma chain. CF(1) is attached to CF(0) by a central stalk formed by the gamma and epsilon chains, while a peripheral stalk is formed by the delta and b chains.

The protein localises to the cell inner membrane. The enzyme catalyses ATP + H2O + 4 H(+)(in) = ADP + phosphate + 5 H(+)(out). Functionally, produces ATP from ADP in the presence of a proton gradient across the membrane. The alpha chain is a regulatory subunit. The protein is ATP synthase subunit alpha of Ehrlichia chaffeensis (strain ATCC CRL-10679 / Arkansas).